The chain runs to 279 residues: Large ribosomal subunit protein mL46 (279 aa).

The residue at position 230 (Lys-230) is an N6-acetyllysine.

This sequence belongs to the mitochondrion-specific ribosomal protein mL46 family. As to quaternary structure, component of the mitochondrial ribosome large subunit (39S) which comprises a 16S rRNA and about 50 distinct proteins.

The protein localises to the mitochondrion. The chain is Large ribosomal subunit protein mL46 (MRPL46) from Pongo abelii (Sumatran orangutan).